A 704-amino-acid polypeptide reads, in one-letter code: Probable serine/threonine-protein kinase WNK1 (704 aa).

One can recognise a Protein kinase domain in the interval 27–284 (GRYNDVLGKG…ARELLKDPFL (258 aa)). ATP is bound by residues 107-110 (TEMF) and Lys-157. Catalysis depends on Asp-174, which acts as the Proton acceptor. Positions 499–521 (QTDLQDSGGSSDDGGGQTQHVKD) are disordered.

Belongs to the protein kinase superfamily. Ser/Thr protein kinase family. WNK subfamily.

It carries out the reaction L-seryl-[protein] + ATP = O-phospho-L-seryl-[protein] + ADP + H(+). It catalyses the reaction L-threonyl-[protein] + ATP = O-phospho-L-threonyl-[protein] + ADP + H(+). This is Probable serine/threonine-protein kinase WNK1 (WNK1) from Oryza sativa subsp. japonica (Rice).